We begin with the raw amino-acid sequence, 398 residues long: S-adenosylmethionine synthase (398 aa).

An ATP-binding site is contributed by 136-141 (GTGSSD).

It belongs to the AdoMet synthase 2 family. It depends on Mg(2+) as a cofactor.

The catalysed reaction is L-methionine + ATP + H2O = S-adenosyl-L-methionine + phosphate + diphosphate. It functions in the pathway amino-acid biosynthesis; S-adenosyl-L-methionine biosynthesis; S-adenosyl-L-methionine from L-methionine: step 1/1. Functionally, catalyzes the formation of S-adenosylmethionine from methionine and ATP. The protein is S-adenosylmethionine synthase of Methanosarcina barkeri (strain Fusaro / DSM 804).